Consider the following 331-residue polypeptide: Serine/threonine-protein phosphatase PP1 isozyme 7 (331 aa).

At Met-1 the chain carries N-acetylmethionine. Residues Asp-60, His-62, Asp-88, and Asn-120 each coordinate Mn(2+). The active-site Proton donor is the His-121. Mn(2+) is bound by residues His-169 and His-244.

The protein belongs to the PPP phosphatase family. PP-1 subfamily. Requires Mn(2+) as cofactor. Expressed in roots, rosettes and flowers.

It is found in the nucleus. Its subcellular location is the cytoplasm. The enzyme catalyses O-phospho-L-seryl-[protein] + H2O = L-seryl-[protein] + phosphate. It carries out the reaction O-phospho-L-threonyl-[protein] + H2O = L-threonyl-[protein] + phosphate. Phosphatase activity is strongly reduced by the protein phosphatase inhibitor 2 (I-2). Its function is as follows. Serine/threonine-protein phosphatase that possesses phosphatase activity toward para-nitrophenyl phosphate (pNPP) in vitro. This Arabidopsis thaliana (Mouse-ear cress) protein is Serine/threonine-protein phosphatase PP1 isozyme 7.